The primary structure comprises 227 residues: Phosphoribosylformylglycinamidine synthase subunit PurQ (227 aa).

The region spanning 3–225 (FAVIVFPGSN…LKQWRETYVV (223 aa)) is the Glutamine amidotransferase type-1 domain. Residue C86 is the Nucleophile of the active site. Residues H194 and E196 contribute to the active site.

In terms of assembly, part of the FGAM synthase complex composed of 1 PurL, 1 PurQ and 2 PurS subunits.

The protein localises to the cytoplasm. The enzyme catalyses N(2)-formyl-N(1)-(5-phospho-beta-D-ribosyl)glycinamide + L-glutamine + ATP + H2O = 2-formamido-N(1)-(5-O-phospho-beta-D-ribosyl)acetamidine + L-glutamate + ADP + phosphate + H(+). It carries out the reaction L-glutamine + H2O = L-glutamate + NH4(+). It functions in the pathway purine metabolism; IMP biosynthesis via de novo pathway; 5-amino-1-(5-phospho-D-ribosyl)imidazole from N(2)-formyl-N(1)-(5-phospho-D-ribosyl)glycinamide: step 1/2. In terms of biological role, part of the phosphoribosylformylglycinamidine synthase complex involved in the purines biosynthetic pathway. Catalyzes the ATP-dependent conversion of formylglycinamide ribonucleotide (FGAR) and glutamine to yield formylglycinamidine ribonucleotide (FGAM) and glutamate. The FGAM synthase complex is composed of three subunits. PurQ produces an ammonia molecule by converting glutamine to glutamate. PurL transfers the ammonia molecule to FGAR to form FGAM in an ATP-dependent manner. PurS interacts with PurQ and PurL and is thought to assist in the transfer of the ammonia molecule from PurQ to PurL. The chain is Phosphoribosylformylglycinamidine synthase subunit PurQ from Bacillus mycoides (strain KBAB4) (Bacillus weihenstephanensis).